We begin with the raw amino-acid sequence, 488 residues long: Protein nucleotidyltransferase YdiU (488 aa).

Positions 91, 93, 94, 114, 126, 127, 177, and 184 each coordinate ATP. Catalysis depends on Asp-253, which acts as the Proton acceptor. Mg(2+) contacts are provided by Asn-254 and Asp-263. Asp-263 serves as a coordination point for ATP.

The protein belongs to the SELO family. It depends on Mg(2+) as a cofactor. Mn(2+) serves as cofactor.

It catalyses the reaction L-seryl-[protein] + ATP = 3-O-(5'-adenylyl)-L-seryl-[protein] + diphosphate. The catalysed reaction is L-threonyl-[protein] + ATP = 3-O-(5'-adenylyl)-L-threonyl-[protein] + diphosphate. The enzyme catalyses L-tyrosyl-[protein] + ATP = O-(5'-adenylyl)-L-tyrosyl-[protein] + diphosphate. It carries out the reaction L-histidyl-[protein] + UTP = N(tele)-(5'-uridylyl)-L-histidyl-[protein] + diphosphate. It catalyses the reaction L-seryl-[protein] + UTP = O-(5'-uridylyl)-L-seryl-[protein] + diphosphate. The catalysed reaction is L-tyrosyl-[protein] + UTP = O-(5'-uridylyl)-L-tyrosyl-[protein] + diphosphate. Functionally, nucleotidyltransferase involved in the post-translational modification of proteins. It can catalyze the addition of adenosine monophosphate (AMP) or uridine monophosphate (UMP) to a protein, resulting in modifications known as AMPylation and UMPylation. This Bacillus cereus (strain ATCC 10987 / NRS 248) protein is Protein nucleotidyltransferase YdiU.